The sequence spans 418 residues: Ankyrin repeat domain-containing protein 61 (418 aa).

8 ANK repeats span residues 27–57, 75–104, 132–161, 167–196, 200–229, 234–273, 277–306, and 310–343; these read ALHSKLYEAIMREDCTTIEVLLRNHPVNQPI, ESIIPIHLAAKYHKAQSLLCLLRHGADPEV, NRTHRILTDIQNSSITCLRILCAHGAQVNT, NKRSPLHLAIAYGCYPVLSILTQNGADVNA, ASMTPLHMAANMLNKEMMETLIAYGANVNC, TGNTPLKLAVCTASSKAGRLLGAGVSCIRLLLTHGAKVNA, KGQTAIHEACFGGREAIINLLLEFEANVNI, and NGESPIYMYLQRSCNVRDTALLARLLYHTYPLRM.

This chain is Ankyrin repeat domain-containing protein 61 (ANKRD61), found in Homo sapiens (Human).